Consider the following 300-residue polypeptide: Mitochondrial GTP/GDP carrier protein 1 (300 aa).

3 Solcar repeats span residues 8 to 108, 117 to 198, and 208 to 293; these read QSGL…KKDF, GKAM…AKEY, and ATWS…LIPR. 6 helical membrane-spanning segments follow: residues 14–34, 85–101, 122–142, 173–189, 214–234, and 268–285; these read LLGS…VDTI, QRVY…EFLN, SAAA…LDVL, GWGW…FALF, FISS…LDVI, and GLTP…FSFA.

Belongs to the mitochondrial carrier (TC 2.A.29) family.

The protein localises to the mitochondrion inner membrane. Mitochondrial GTP/GDP transporter required for GTP uptake and GDP exit from mitochondria. Involved in mitochondrial iron transport and essential for mitochondrial genome maintenance. In Saccharomyces cerevisiae (strain ATCC 204508 / S288c) (Baker's yeast), this protein is Mitochondrial GTP/GDP carrier protein 1 (GGC1).